Reading from the N-terminus, the 318-residue chain is MITDCFEADIAIPSGISRPDAAALQRCEGRVVFLPTIRRQLALADVAHESFVSGGVSPDTLGLLLAYRRRFPAVITRVLPTRIVACPVDLGLTHAGTVNLRNTSPVDLCNGDPVSLVPPVFEGQATDVRLESLDLTLRFPVPLPTPLAREIVARLVARGIRDLNPDPRTPGELPDLNVLYYNGARLSLVADVQQLASVNTELRSLVLNMVYSITEGTTLILTLIPRLLALSAQDGYVNALLQMQSVTREAAQLIHPEAPMLMQDGERRLPLYEALVAWLAHAGQLGDILALAPAVRVCTFDGAAVVQSGDMAPVIRYP.

The protein belongs to the herpesviridae TRX2 protein family. In terms of assembly, interacts with TRX1 and major capisd protein/MCP.

The protein resides in the virion. Its subcellular location is the host nucleus. Its function is as follows. Structural component of the T=16 icosahedral capsid. The capsid is composed of pentamers and hexamers of major capsid protein/MCP, which are linked together by heterotrimers called triplexes. These triplexes are formed by a single molecule of triplex protein 1/TRX1 and two copies of triplex protein 2/TRX2. Additionally, TRX1 is required for efficient transport of TRX2 to the nucleus, which is the site of capsid assembly. In Human herpesvirus 2 (strain HG52) (HHV-2), this protein is Triplex capsid protein 2.